Reading from the N-terminus, the 311-residue chain is Urease accessory protein UreD (311 aa).

Belongs to the UreD family. UreD, UreF and UreG form a complex that acts as a GTP-hydrolysis-dependent molecular chaperone, activating the urease apoprotein by helping to assemble the nickel containing metallocenter of UreC. The UreE protein probably delivers the nickel.

Its subcellular location is the cytoplasm. Required for maturation of urease via the functional incorporation of the urease nickel metallocenter. The chain is Urease accessory protein UreD from Synechococcus sp. (strain CC9605).